We begin with the raw amino-acid sequence, 85 residues long: U4-theraphotoxin-Hhn1d (85 aa).

Residues 1-22 (MKVTLIAILTCAAVLVLHTTAA) form the signal peptide. Residues 23-48 (EELEAESQLMEVGMPDTELAAVDEER) constitute a propeptide that is removed on maturation. 3 disulfides stabilise this stretch: Cys52/Cys66, Cys56/Cys77, and Cys71/Cys82.

The protein belongs to the neurotoxin 12 (Hwtx-2) family. 02 (Hwtx-2) subfamily. Expressed by the venom gland.

It is found in the secreted. Postsynaptic neurotoxin. In Cyriopagopus hainanus (Chinese bird spider), this protein is U4-theraphotoxin-Hhn1d.